The sequence spans 249 residues: tRNA pseudouridine synthase A (249 aa).

The Nucleophile role is filled by aspartate 53. Tyrosine 111 lines the substrate pocket.

Belongs to the tRNA pseudouridine synthase TruA family. As to quaternary structure, homodimer.

The catalysed reaction is uridine(38/39/40) in tRNA = pseudouridine(38/39/40) in tRNA. In terms of biological role, formation of pseudouridine at positions 38, 39 and 40 in the anticodon stem and loop of transfer RNAs. This is tRNA pseudouridine synthase A from Streptococcus pyogenes serotype M1.